A 667-amino-acid polypeptide reads, in one-letter code: WD repeat-containing protein 48 homolog (667 aa).

WD repeat units follow at residues 26-65, 71-110, 113-152, 164-203, 206-245, 248-287, 290-329, and 350-389; these read QHRN…NEKY, HHND…CMST, THRD…ALTA, GSKD…RSMK, GHTE…CVQT, VHKE…NKML, EEQA…RCTL, and KGGA…KKEQ. The disordered stretch occupies residues 591-615; that stretch reads ETTPSGGNANNSLQNSQSDANSEGS.

Belongs to the WD repeat WDR48 family. Catalytic component of the Usp12-46 deubiquitylase complex consisting of Usp12-46, Wdr20 and Uaf1; regulatory subunit that, together wtih Wdr20, stabilizes Usp12-46. The Usp12-46 deubiquitylase complex associates with arr/arrow; the interaction leads to deubiquitination and stabilization of arr/arrow.

In terms of biological role, regulatory component of the Usp12-46 deubiquitylase complex. activates deubiquitination by increasing the catalytic turnover without increasing the affinity of deubiquitinating enzymes for the substrate. The complex deubiquitylates the wg/wingless-signaling receptor arr/arrow, which stabilizes the receptor and increases its concentration at the cell surface; this enhances the sensitivity of cells to wg/wingless-signal stimulation. This increases the amplitude and spatial range of the signaling response to the wg/wingless morphogen gradient, facilitating the precise concentration-dependent regulation of its target genes. Together with Wdr20 and Usp12-46 required for wg/wingless-mediated signaling in the wing imaginal disc and for wg/wingless-dependent regulation of intestinal stem cell proliferation. The chain is WD repeat-containing protein 48 homolog from Drosophila ananassae (Fruit fly).